The primary structure comprises 195 residues: MIIRDVELVKIARTPGDYPPPLKGEVAFVGRSNVGKSSLLNALFNRKVAFVSKTPGKTRSINFYLVNSKYYFVDLPGYGYAKVSKKERMLWKRLVEDYFKNRWSLQMVFLLVDGRIPPQDSDFMMIEWMKSLNIPFTIVLTKMDKVKMSERAKKLEEHRKVFSRYGEYTIIPTSSVTGEGISELLDLISTLLKEN.

The EngB-type G domain maps to L22 to E194. Residues G30–S37, G56–S60, D74–G77, T141–D144, and T173–S175 each bind GTP. S37 and T58 together coordinate Mg(2+).

Belongs to the TRAFAC class TrmE-Era-EngA-EngB-Septin-like GTPase superfamily. EngB GTPase family. Mg(2+) serves as cofactor.

Functionally, necessary for normal cell division and for the maintenance of normal septation. The polypeptide is Probable GTP-binding protein EngB (Thermotoga sp. (strain RQ2)).